We begin with the raw amino-acid sequence, 876 residues long: Probable galactinol--sucrose galactosyltransferase 4 (876 aa).

Phosphoserine occurs at positions 7 and 9.

The protein belongs to the glycosyl hydrolases 36 family.

It catalyses the reaction alpha-D-galactosyl-(1-&gt;3)-1D-myo-inositol + sucrose = raffinose + myo-inositol. In terms of biological role, transglycosidase operating by a ping-pong reaction mechanism. Involved in the synthesis of raffinose, a major soluble carbohydrate in seeds, roots and tubers. The protein is Probable galactinol--sucrose galactosyltransferase 4 (RFS4) of Arabidopsis thaliana (Mouse-ear cress).